Reading from the N-terminus, the 259-residue chain is Chloroplastic import inner membrane translocase subunit HP30-2 (259 aa).

The next 4 membrane-spanning stretches (helical) occupy residues 55–75, 108–124, 135–155, and 158–178; these read AVVT…MGTL, NFAA…CVMK, AVVA…GLQG, and MNAI…FKLG.

It belongs to the Tim17/Tim22/Tim23 family. In terms of assembly, probable component of a protein-conducting channel made of HP30-1, HP30-2 and HP20 that mediates the import of transit sequence-less proteins into the chloroplastic inner membrane. Interacts with CEQORH.

The protein localises to the mitochondrion membrane. It is found in the plastid. It localises to the chloroplast inner membrane. Its function is as follows. Together with HP30-1 and HP20, triggers the import and insertion of transit sequence-less multi-pass transmembrane proteins (e.g. CEQORH) into the chloroplastic inner membrane. The sequence is that of Chloroplastic import inner membrane translocase subunit HP30-2 from Arabidopsis thaliana (Mouse-ear cress).